We begin with the raw amino-acid sequence, 333 residues long: UPF0284 protein VNG_1572C (333 aa).

This sequence belongs to the UPF0284 family.

The sequence is that of UPF0284 protein VNG_1572C from Halobacterium salinarum (strain ATCC 700922 / JCM 11081 / NRC-1) (Halobacterium halobium).